A 41-amino-acid chain; its full sequence is Inducible serine protease inhibitor 3 (41 aa).

Inhibits trypsin and the toxin proteases PR1 and PR2 of M.anisopliae. Does not inhibit chymotrypsin, subtilisin Carlsberg, proteinase K and porcine pancreatic elastase. In Galleria mellonella (Greater wax moth), this protein is Inducible serine protease inhibitor 3.